A 276-amino-acid chain; its full sequence is 4-deoxy-L-threo-5-hexosulose-uronate ketol-isomerase 1 (276 aa).

4 residues coordinate Zn(2+): histidine 194, histidine 196, glutamate 201, and histidine 243.

Belongs to the KduI family. The cofactor is Zn(2+).

It catalyses the reaction 5-dehydro-4-deoxy-D-glucuronate = 3-deoxy-D-glycero-2,5-hexodiulosonate. It participates in glycan metabolism; pectin degradation; 2-dehydro-3-deoxy-D-gluconate from pectin: step 4/5. Its function is as follows. Catalyzes the isomerization of 5-dehydro-4-deoxy-D-glucuronate to 3-deoxy-D-glycero-2,5-hexodiulosonate. The chain is 4-deoxy-L-threo-5-hexosulose-uronate ketol-isomerase 1 (kduI1) from Enterococcus faecalis (strain ATCC 700802 / V583).